A 276-amino-acid polypeptide reads, in one-letter code: Putative glycosyltransferase 6 domain-containing protein 1 (276 aa).

Residues 1–6 (MNSKRM) lie on the Cytoplasmic side of the membrane. A helical; Signal-anchor for type II membrane protein membrane pass occupies residues 7–23 (LLLVLFAFSLMLVERYF). The Lumenal portion of the chain corresponds to 24 to 276 (RNHQVEELRL…NKYFYLNKPT (253 aa)). The N-linked (GlcNAc...) asparagine glycan is linked to N74. Substrate-binding positions include 82–87 (FATGRF), 173–175 (AAN), and 195–198 (HAWW). The active-site Nucleophile is E263.

It belongs to the glycosyltransferase 6 family. Mn(2+) is required as a cofactor. As to expression, expressed in both healthy and inflamed gingival tissue samples at similar levels, with higher expression in the gingival connective tissue compared to gingival epithelium. Strongest expression in testis, followed by leukocytes.

The protein localises to the membrane. The chain is Putative glycosyltransferase 6 domain-containing protein 1 (GLT6D1) from Homo sapiens (Human).